A 319-amino-acid chain; its full sequence is ATP-dependent 6-phosphofructokinase (319 aa).

Residue Gly11 participates in ATP binding. Arg21–Arg25 is a binding site for ADP. Residues Arg72–Cys73 and Gly102–Ser105 contribute to the ATP site. A Mg(2+)-binding site is contributed by Asp103. Residue Thr125–Asp127 participates in substrate binding. Catalysis depends on Asp127, which acts as the Proton acceptor. Arg154 is an ADP binding site. Residues Arg162 and Met169–Arg171 each bind substrate. ADP contacts are provided by residues Gly185 to Glu187, Arg211, and Lys213 to His215. Residues Glu222, Arg243, and His249–Arg252 contribute to the substrate site.

This sequence belongs to the phosphofructokinase type A (PFKA) family. ATP-dependent PFK group I subfamily. Prokaryotic clade 'B1' sub-subfamily. Homotetramer. The cofactor is Mg(2+).

The protein resides in the cytoplasm. The enzyme catalyses beta-D-fructose 6-phosphate + ATP = beta-D-fructose 1,6-bisphosphate + ADP + H(+). It participates in carbohydrate degradation; glycolysis; D-glyceraldehyde 3-phosphate and glycerone phosphate from D-glucose: step 3/4. Allosterically activated by ADP and other diphosphonucleosides, and allosterically inhibited by phosphoenolpyruvate. Its function is as follows. Catalyzes the phosphorylation of D-fructose 6-phosphate to fructose 1,6-bisphosphate by ATP, the first committing step of glycolysis. The polypeptide is ATP-dependent 6-phosphofructokinase (Geobacillus kaustophilus (strain HTA426)).